A 334-amino-acid polypeptide reads, in one-letter code: Serine/threonine-protein kinase SAPK3 (334 aa).

Residues 5 to 261 enclose the Protein kinase domain; it reads YEALKELGAG…IPEIKKHTWF (257 aa). Residues 11 to 19 and Lys34 contribute to the ATP site; that span reads LGAGNFGVA. The active-site Proton acceptor is Asp124.

This sequence belongs to the protein kinase superfamily. Ser/Thr protein kinase family. Autophosphorylated in presence of Ca(2+). As to expression, expressed in leaves and maturing seeds, but not in roots and stems of field-grown plants.

Its subcellular location is the cytoplasm. It is found in the nucleus. It carries out the reaction L-seryl-[protein] + ATP = O-phospho-L-seryl-[protein] + ADP + H(+). The enzyme catalyses L-threonyl-[protein] + ATP = O-phospho-L-threonyl-[protein] + ADP + H(+). With respect to regulation, activated by phosphorylation. May play a role in signal transduction of hyperosmotic response. In Oryza sativa subsp. indica (Rice), this protein is Serine/threonine-protein kinase SAPK3 (SAPK3).